The following is a 130-amino-acid chain: Protein ApaG (130 aa).

In terms of domain architecture, ApaG spans 3 to 127 (RATTRKIQVT…FSLDVPHMAR (125 aa)).

This chain is Protein ApaG, found in Azorhizobium caulinodans (strain ATCC 43989 / DSM 5975 / JCM 20966 / LMG 6465 / NBRC 14845 / NCIMB 13405 / ORS 571).